The primary structure comprises 303 residues: Methionyl-tRNA formyltransferase (303 aa).

110-113 serves as a coordination point for (6S)-5,6,7,8-tetrahydrofolate; it reads SLLP.

The protein belongs to the Fmt family.

It carries out the reaction L-methionyl-tRNA(fMet) + (6R)-10-formyltetrahydrofolate = N-formyl-L-methionyl-tRNA(fMet) + (6S)-5,6,7,8-tetrahydrofolate + H(+). Attaches a formyl group to the free amino group of methionyl-tRNA(fMet). The formyl group appears to play a dual role in the initiator identity of N-formylmethionyl-tRNA by promoting its recognition by IF2 and preventing the misappropriation of this tRNA by the elongation apparatus. This chain is Methionyl-tRNA formyltransferase, found in Ehrlichia ruminantium (strain Gardel).